Consider the following 343-residue polypeptide: Phenylalanine--tRNA ligase alpha subunit (343 aa).

Glutamate 258 is a Mg(2+) binding site.

Belongs to the class-II aminoacyl-tRNA synthetase family. Phe-tRNA synthetase alpha subunit type 1 subfamily. As to quaternary structure, tetramer of two alpha and two beta subunits. Requires Mg(2+) as cofactor.

The protein localises to the cytoplasm. It carries out the reaction tRNA(Phe) + L-phenylalanine + ATP = L-phenylalanyl-tRNA(Phe) + AMP + diphosphate + H(+). The polypeptide is Phenylalanine--tRNA ligase alpha subunit (Symbiobacterium thermophilum (strain DSM 24528 / JCM 14929 / IAM 14863 / T)).